The primary structure comprises 54 residues: Phosphoribosylformylglycinamidine synthase subunit PurQ (54 aa).

The Glutamine amidotransferase type-1 domain occupies 1 to 51 (MHDIAGVTNETGNVLGMMPHPERAVEALLGGTDGLGVFQSLINQTEGADVR). Residues His-20 and Glu-22 contribute to the active site.

In terms of assembly, part of the FGAM synthase complex composed of 1 PurL, 1 PurQ and 2 PurS subunits.

It localises to the cytoplasm. It carries out the reaction N(2)-formyl-N(1)-(5-phospho-beta-D-ribosyl)glycinamide + L-glutamine + ATP + H2O = 2-formamido-N(1)-(5-O-phospho-beta-D-ribosyl)acetamidine + L-glutamate + ADP + phosphate + H(+). It catalyses the reaction L-glutamine + H2O = L-glutamate + NH4(+). It functions in the pathway purine metabolism; IMP biosynthesis via de novo pathway; 5-amino-1-(5-phospho-D-ribosyl)imidazole from N(2)-formyl-N(1)-(5-phospho-D-ribosyl)glycinamide: step 1/2. In terms of biological role, part of the phosphoribosylformylglycinamidine synthase complex involved in the purines biosynthetic pathway. Catalyzes the ATP-dependent conversion of formylglycinamide ribonucleotide (FGAR) and glutamine to yield formylglycinamidine ribonucleotide (FGAM) and glutamate. The FGAM synthase complex is composed of three subunits. PurQ produces an ammonia molecule by converting glutamine to glutamate. PurL transfers the ammonia molecule to FGAR to form FGAM in an ATP-dependent manner. PurS interacts with PurQ and PurL and is thought to assist in the transfer of the ammonia molecule from PurQ to PurL. The polypeptide is Phosphoribosylformylglycinamidine synthase subunit PurQ (purQ) (Lacticaseibacillus casei (Lactobacillus casei)).